We begin with the raw amino-acid sequence, 264 residues long: Thymidylate synthase (264 aa).

R21 lines the dUMP pocket. H51 contacts (6R)-5,10-methylene-5,6,7,8-tetrahydrofolate. 126–127 is a dUMP binding site; it reads RR. C146 functions as the Nucleophile in the catalytic mechanism. DUMP is bound by residues 166-169, N177, and 207-209; these read RSGD and HLY. D169 is a (6R)-5,10-methylene-5,6,7,8-tetrahydrofolate binding site. A263 contributes to the (6R)-5,10-methylene-5,6,7,8-tetrahydrofolate binding site.

The protein belongs to the thymidylate synthase family. Bacterial-type ThyA subfamily. Homodimer.

Its subcellular location is the cytoplasm. It carries out the reaction dUMP + (6R)-5,10-methylene-5,6,7,8-tetrahydrofolate = 7,8-dihydrofolate + dTMP. It participates in pyrimidine metabolism; dTTP biosynthesis. In terms of biological role, catalyzes the reductive methylation of 2'-deoxyuridine-5'-monophosphate (dUMP) to 2'-deoxythymidine-5'-monophosphate (dTMP) while utilizing 5,10-methylenetetrahydrofolate (mTHF) as the methyl donor and reductant in the reaction, yielding dihydrofolate (DHF) as a by-product. This enzymatic reaction provides an intracellular de novo source of dTMP, an essential precursor for DNA biosynthesis. This is Thymidylate synthase from Brevibacillus brevis (strain 47 / JCM 6285 / NBRC 100599).